We begin with the raw amino-acid sequence, 463 residues long: Adenosylhomocysteinase (463 aa).

Residues threonine 54, aspartate 128, and glutamate 189 each coordinate substrate. Residue 190–192 participates in NAD(+) binding; sequence TTT. Residues lysine 219 and aspartate 223 each coordinate substrate. NAD(+) is bound by residues asparagine 224, 253–258, glutamate 276, asparagine 311, 332–334, and asparagine 377; these read GYGDVG and IGH.

It belongs to the adenosylhomocysteinase family. In terms of assembly, homotetramer. Requires NAD(+) as cofactor.

It localises to the cytoplasm. It carries out the reaction S-adenosyl-L-homocysteine + H2O = L-homocysteine + adenosine. It functions in the pathway amino-acid biosynthesis; L-homocysteine biosynthesis; L-homocysteine from S-adenosyl-L-homocysteine: step 1/1. In terms of biological role, may play a key role in the regulation of the intracellular concentration of adenosylhomocysteine. The protein is Adenosylhomocysteinase of Rhodobacter capsulatus (strain ATCC BAA-309 / NBRC 16581 / SB1003).